The following is a 245-amino-acid chain: NADH-quinone oxidoreductase subunit C (245 aa).

The span at 1-10 shows a compositional bias: basic and acidic residues; it reads MSAPQDRTDD. Disordered stretches follow at residues 1-54 and 216-245; these read MSAP…GYGG and PQRK…RSYQ. The span at 11 to 28 shows a compositional bias: low complexity; sequence GGVPVPVTPAGATGGAPA. Residues 39 to 54 show a composition bias toward gly residues; sequence GMFGDQGTGDVSGYGG.

Belongs to the complex I 30 kDa subunit family. NDH-1 is composed of 14 different subunits. Subunits NuoB, C, D, E, F, and G constitute the peripheral sector of the complex.

The protein localises to the cell membrane. It catalyses the reaction a quinone + NADH + 5 H(+)(in) = a quinol + NAD(+) + 4 H(+)(out). In terms of biological role, NDH-1 shuttles electrons from NADH, via FMN and iron-sulfur (Fe-S) centers, to quinones in the respiratory chain. The immediate electron acceptor for the enzyme in this species is believed to be a menaquinone. Couples the redox reaction to proton translocation (for every two electrons transferred, four hydrogen ions are translocated across the cytoplasmic membrane), and thus conserves the redox energy in a proton gradient. The sequence is that of NADH-quinone oxidoreductase subunit C from Salinispora tropica (strain ATCC BAA-916 / DSM 44818 / JCM 13857 / NBRC 105044 / CNB-440).